Here is a 508-residue protein sequence, read N- to C-terminus: UDP-N-acetylmuramoyl-L-alanyl-D-glutamate--L-lysine ligase (508 aa).

Serine 47 provides a ligand contact to UDP-N-acetyl-alpha-D-muramoyl-L-alanyl-D-glutamate. 124 to 130 (GTKGKTT) is an ATP binding site. UDP-N-acetyl-alpha-D-muramoyl-L-alanyl-D-glutamate-binding positions include 168 to 169 (TT), serine 195, and arginine 203. At lysine 237 the chain carries N6-carboxylysine. The L-lysine recognition motif motif lies at 425–428 (DDPA).

This sequence belongs to the MurCDEF family. MurE subfamily. Carboxylation is probably crucial for Mg(2+) binding and, consequently, for the gamma-phosphate positioning of ATP.

Its subcellular location is the cytoplasm. The enzyme catalyses UDP-N-acetyl-alpha-D-muramoyl-L-alanyl-D-glutamate + L-lysine + ATP = UDP-N-acetyl-alpha-D-muramoyl-L-alanyl-gamma-D-glutamyl-L-lysine + ADP + phosphate + H(+). Its pathway is cell wall biogenesis; peptidoglycan biosynthesis. Catalyzes the addition of L-lysine to the nucleotide precursor UDP-N-acetylmuramoyl-L-alanyl-D-glutamate (UMAG) in the biosynthesis of bacterial cell-wall peptidoglycan. The protein is UDP-N-acetylmuramoyl-L-alanyl-D-glutamate--L-lysine ligase of Enterococcus faecalis (strain ATCC 700802 / V583).